Consider the following 879-residue polypeptide: Protein P (879 aa).

Residues methionine 1–glutamine 184 form a terminal protein domain (TP) region. Residues leucine 185–isoleucine 382 form a spacer region. The interval serine 304–glycine 345 is disordered. The interval aspartate 383 to glutamine 724 is polymerase/reverse transcriptase domain (RT). One can recognise a Reverse transcriptase domain in the interval aspartate 393–isoleucine 634. Mg(2+)-binding residues include aspartate 465, aspartate 585, and aspartate 586.

The protein belongs to the hepadnaviridae P protein family.

The enzyme catalyses DNA(n) + a 2'-deoxyribonucleoside 5'-triphosphate = DNA(n+1) + diphosphate. It catalyses the reaction Endonucleolytic cleavage to 5'-phosphomonoester.. Its activity is regulated as follows. Activated by host HSP70 and HSP40 in vitro to be able to bind the epsilon loop of the pgRNA. Because deletion of the RNase H region renders the protein partly chaperone-independent, the chaperones may be needed indirectly to relieve occlusion of the RNA-binding site by this domain. Inhibited by several reverse-transcriptase inhibitors: Lamivudine, Adefovir and Entecavir. Functionally, multifunctional enzyme that converts the viral RNA genome into dsDNA in viral cytoplasmic capsids. This enzyme displays a DNA polymerase activity that can copy either DNA or RNA templates, and a ribonuclease H (RNase H) activity that cleaves the RNA strand of RNA-DNA heteroduplexes in a partially processive 3'- to 5'-endonucleasic mode. Neo-synthesized pregenomic RNA (pgRNA) are encapsidated together with the P protein, and reverse-transcribed inside the nucleocapsid. Initiation of reverse-transcription occurs first by binding the epsilon loop on the pgRNA genome, and is initiated by protein priming, thereby the 5'-end of (-)DNA is covalently linked to P protein. Partial (+)DNA is synthesized from the (-)DNA template and generates the relaxed circular DNA (RC-DNA) genome. After budding and infection, the RC-DNA migrates in the nucleus, and is converted into a plasmid-like covalently closed circular DNA (cccDNA). The activity of P protein does not seem to be necessary for cccDNA generation, and is presumably released from (+)DNA by host nuclear DNA repair machinery. This Woodchuck hepatitis B virus (isolate 1) (WHV) protein is Protein P.